Reading from the N-terminus, the 84-residue chain is Putative defensin-like protein 101 (84 aa).

The first 27 residues, 1-27, serve as a signal peptide directing secretion; the sequence is MDITKNIVTLLLVVLFPILFYYNNVLA. Cystine bridges form between C39/C81, C43/C67, C52/C79, and C56/C80.

The protein belongs to the DEFL family.

The protein localises to the secreted. This Arabidopsis thaliana (Mouse-ear cress) protein is Putative defensin-like protein 101.